The primary structure comprises 268 residues: Small ribosomal subunit protein eS1 (268 aa).

Disordered stretches follow at residues 1–21 and 238–268; these read MAVGKNKGLSKGGKKGGKKKV and GGGKSSDAVVSTEGAVIDRPEGYEPPVQEAV.

The protein belongs to the eukaryotic ribosomal protein eS1 family. Component of the small ribosomal subunit. Mature ribosomes consist of a small (40S) and a large (60S) subunit. The 40S subunit contains about 33 different proteins and 1 molecule of RNA (18S). The 60S subunit contains about 49 different proteins and 3 molecules of RNA (28S, 5.8S and 5S).

Its subcellular location is the cytoplasm. In terms of biological role, essential for oogenesis; required for late follicle cell development. The chain is Small ribosomal subunit protein eS1 from Drosophila ananassae (Fruit fly).